A 190-amino-acid chain; its full sequence is MDNQFIFKYSWETLPKKWVKKMERSEHGNRFDTNTDYLFQLLCFMKLHTYTRVQVLIDICGVDYPSRKQRFEVVYNLLSIRYNSRIRVQTSADEVTRISSVVSLFPSAGWWEREVWDMFGVFSINHPDLRRILTDYGFEGHPLRKDFPLSGYVEVRYDDPEKRVVSEPIEMTQEFRYFDFASPWEQRSDG.

It belongs to the complex I 30 kDa subunit family. Complex I is composed of about 45 different subunits. This is a component of the iron-sulfur (IP) fragment of the enzyme.

It is found in the mitochondrion inner membrane. It catalyses the reaction a ubiquinone + NADH + 5 H(+)(in) = a ubiquinol + NAD(+) + 4 H(+)(out). Core subunit of the mitochondrial membrane respiratory chain NADH dehydrogenase (Complex I) that is believed to belong to the minimal assembly required for catalysis. Complex I functions in the transfer of electrons from NADH to the respiratory chain. The immediate electron acceptor for the enzyme is believed to be ubiquinone. This is NADH dehydrogenase [ubiquinone] iron-sulfur protein 3 (NAD9) from Solanum tuberosum (Potato).